The following is a 185-amino-acid chain: Large ribosomal subunit protein uL5 (185 aa).

Belongs to the universal ribosomal protein uL5 family. Part of the 50S ribosomal subunit; part of the 5S rRNA/L5/L18/L25 subcomplex. Contacts the 5S rRNA and the P site tRNA. Forms a bridge to the 30S subunit in the 70S ribosome.

In terms of biological role, this is one of the proteins that bind and probably mediate the attachment of the 5S RNA into the large ribosomal subunit, where it forms part of the central protuberance. In the 70S ribosome it contacts protein S13 of the 30S subunit (bridge B1b), connecting the 2 subunits; this bridge is implicated in subunit movement. Contacts the P site tRNA; the 5S rRNA and some of its associated proteins might help stabilize positioning of ribosome-bound tRNAs. The polypeptide is Large ribosomal subunit protein uL5 (Nitrobacter hamburgensis (strain DSM 10229 / NCIMB 13809 / X14)).